The sequence spans 105 residues: Large ribosomal subunit protein uL24 (105 aa).

This sequence belongs to the universal ribosomal protein uL24 family. As to quaternary structure, part of the 50S ribosomal subunit.

One of two assembly initiator proteins, it binds directly to the 5'-end of the 23S rRNA, where it nucleates assembly of the 50S subunit. Functionally, one of the proteins that surrounds the polypeptide exit tunnel on the outside of the subunit. This chain is Large ribosomal subunit protein uL24, found in Aliivibrio salmonicida (strain LFI1238) (Vibrio salmonicida (strain LFI1238)).